The chain runs to 400 residues: Glycerol-3-phosphate dehydrogenase [NAD(+)] 1 (400 aa).

NAD(+) contacts are provided by residues 50–55, phenylalanine 138, lysine 161, and alanine 194; that span reads GSGNWG. Lysine 161 provides a ligand contact to substrate. Residue lysine 254 is the Proton acceptor of the active site. Residues arginine 319 and glutamine 348 each contribute to the NAD(+) site. Residue 319–320 coordinates substrate; sequence RN.

The protein belongs to the NAD-dependent glycerol-3-phosphate dehydrogenase family.

The catalysed reaction is sn-glycerol 3-phosphate + NAD(+) = dihydroxyacetone phosphate + NADH + H(+). The protein is Glycerol-3-phosphate dehydrogenase [NAD(+)] 1 (GPD1) of Candida glabrata (strain ATCC 2001 / BCRC 20586 / JCM 3761 / NBRC 0622 / NRRL Y-65 / CBS 138) (Yeast).